A 359-amino-acid chain; its full sequence is DNA replication and repair protein RecF (359 aa).

30–37 (GPNGSGKT) contributes to the ATP binding site.

Belongs to the RecF family.

The protein localises to the cytoplasm. In terms of biological role, the RecF protein is involved in DNA metabolism; it is required for DNA replication and normal SOS inducibility. RecF binds preferentially to single-stranded, linear DNA. It also seems to bind ATP. The polypeptide is DNA replication and repair protein RecF (Vibrio vulnificus (strain CMCP6)).